The following is a 67-amino-acid chain: Large ribosomal subunit protein bL35 (67 aa).

The interval Met1–Gly20 is disordered.

This sequence belongs to the bacterial ribosomal protein bL35 family.

This is Large ribosomal subunit protein bL35 from Anaeromyxobacter dehalogenans (strain 2CP-1 / ATCC BAA-258).